The chain runs to 226 residues: Protein GrpE (226 aa).

Disordered regions lie at residues 1-24 and 205-226; these read MADE…PRDR and GVSK…EDNA. Positions 217-226 are enriched in polar residues; that stretch reads NGASTSEDNA.

This sequence belongs to the GrpE family. Homodimer.

It is found in the cytoplasm. In terms of biological role, participates actively in the response to hyperosmotic and heat shock by preventing the aggregation of stress-denatured proteins, in association with DnaK and GrpE. It is the nucleotide exchange factor for DnaK and may function as a thermosensor. Unfolded proteins bind initially to DnaJ; upon interaction with the DnaJ-bound protein, DnaK hydrolyzes its bound ATP, resulting in the formation of a stable complex. GrpE releases ADP from DnaK; ATP binding to DnaK triggers the release of the substrate protein, thus completing the reaction cycle. Several rounds of ATP-dependent interactions between DnaJ, DnaK and GrpE are required for fully efficient folding. This chain is Protein GrpE, found in Brucella melitensis biotype 1 (strain ATCC 23456 / CCUG 17765 / NCTC 10094 / 16M).